The sequence spans 266 residues: Protein phosphatase 1 regulatory subunit 35 (266 aa).

The segment covering 1–10 (MMVYNGSQLE) has biased composition (polar residues). The segment at 1-118 (MMVYNGSQLE…QDLGTPVQQS (118 aa)) is disordered. The span at 21–38 (PGPPPEPRAPEPGAPVPE) shows a compositional bias: pro residues. Residues Ser46 and Ser51 each carry the phosphoserine modification. Residues 62 to 79 (GRRKGRADRRGGARKGRQ) are compositionally biased toward basic residues. Residues 86–97 (PPSPVRSGPPPA) are compositionally biased toward pro residues.

It belongs to the PPP1R35 family. In terms of assembly, interacts with PPP1CA; this interaction mediates the PPP1CA phosphatase activity inhibition. Interacts with RTTN; this interaction allows the mutual recruitment to the centriole.

The protein resides in the cytoplasm. Its subcellular location is the cytoskeleton. It is found in the microtubule organizing center. The protein localises to the centrosome. It localises to the centriole. During centriole duplication, plays a role in the centriole elongation by promoting the recruitment of the microtubule-binding elongation machinery through its interaction with RTTN, leading to the centriole to centrosome conversion. In addition may play a role in the primary cilia assembly. The protein is Protein phosphatase 1 regulatory subunit 35 of Bos taurus (Bovine).